The chain runs to 349 residues: 1-acylglycerol-3-phosphate O-acyltransferase ABHD5 (349 aa).

At A2 the chain carries N-acetylalanine. Positions 77-184 (PLVLLHGFGG…LVEPWGFPER (108 aa)) constitute an AB hydrolase-1 domain. S122 carries the phosphoserine modification. Residues 327–332 (HYVYAD) carry the HXXXXD motif motif.

It belongs to the peptidase S33 family. ABHD4/ABHD5 subfamily. Interacts with ADRP, PLIN and PNPLA2. Interacts with PLIN5; promotes interaction with PNPLA2.

The protein localises to the cytoplasm. Its subcellular location is the lipid droplet. It catalyses the reaction a 1-acyl-sn-glycero-3-phosphate + an acyl-CoA = a 1,2-diacyl-sn-glycero-3-phosphate + CoA. The catalysed reaction is 1-(9Z-octadecenoyl)-sn-glycero-3-phosphate + (9Z)-octadecenoyl-CoA = 1,2-di-(9Z-octadecenoyl)-sn-glycero-3-phosphate + CoA. The enzyme catalyses 1-(9Z-octadecenoyl)-sn-glycero-3-phosphate + hexadecanoyl-CoA = 1-(9Z)-octadecenoyl-2-hexadecanoyl-sn-glycero-3-phosphate + CoA. It carries out the reaction 1-(9Z-octadecenoyl)-sn-glycero-3-phosphate + octadecanoyl-CoA = 1-(9Z-octadecenoyl)-2-octadecanoyl-sn-glycero-3-phosphate + CoA. It catalyses the reaction 1-(9Z-octadecenoyl)-sn-glycero-3-phosphate + (5Z,8Z,11Z,14Z)-eicosatetraenoyl-CoA = 1-(9Z)-octadecenoyl-2-(5Z,8Z,11Z,14Z)-eicosatetraenoyl-sn-glycero-3-phosphate + CoA. The catalysed reaction is eicosanoyl-CoA + 1-(9Z-octadecenoyl)-sn-glycero-3-phosphate = 1-(9Z)-octadecenoyl-2-eicosanoyl-sn-glycero-3-phosphate + CoA. The enzyme catalyses 1-hexadecanoyl-sn-glycero-3-phosphate + (9Z)-octadecenoyl-CoA = 1-hexadecanoyl-2-(9Z-octadecenoyl)-sn-glycero-3-phosphate + CoA. It carries out the reaction 1-octadecanoyl-sn-glycero-3-phosphate + (9Z)-octadecenoyl-CoA = 1-octadecanoyl-2-(9Z-octadecenoyl)-sn-glycero-3-phosphate + CoA. It catalyses the reaction 1-(5Z,8Z,11Z,14Z-eicosatetraenoyl)-sn-glycero-3-phosphate + (9Z)-octadecenoyl-CoA = 1-(5Z,8Z,11Z,14Z)-eicosatetraenoyl-2-(9Z)-octadecenoyl-sn-glycero-3-phosphate + CoA. With respect to regulation, acyltransferase activity is inhibited by detergents such as Triton X-100 and 3-[(3-cholamidopropyl)dimethylammonio]-1-propanesulfonate (CHAPS). Acyltransferase activity is inhibited by the presence of magnesium and calcium. In terms of biological role, coenzyme A-dependent lysophosphatidic acid acyltransferase that catalyzes the transfer of an acyl group on a lysophosphatidic acid. Functions preferentially with 1-oleoyl-lysophosphatidic acid followed by 1-palmitoyl-lysophosphatidic acid, 1-stearoyl-lysophosphatidic acid and 1-arachidonoyl-lysophosphatidic acid as lipid acceptor. Functions preferentially with arachidonoyl-CoA followed by oleoyl-CoA as acyl group donors. Functions in phosphatidic acid biosynthesis. May regulate the cellular storage of triacylglycerol through activation of the phospholipase PNPLA2. Involved in keratinocyte differentiation. Regulates lipid droplet fusion. The polypeptide is 1-acylglycerol-3-phosphate O-acyltransferase ABHD5 (Pongo abelii (Sumatran orangutan)).